The following is a 596-amino-acid chain: MLPTRRPLAEVTRELVAVATGKLPADTVIKGGKVVNVFTGEILPWDIAIKNGRIASVGDVSAAVGPETEVIDASGYYLCPGFMDGHVHVESSMVTVTQFARAVLPGGTTAIFMDPHEIANVLGMDGVKLMVDEGRELPLKVFATMPSCVPAAPGFEDAGASFGPEEVAAAMQWPGICGLGEMMNFPGVLAGDPAVHGELRATLAAGKPITGHFAMPADFQGLAGYTAAGISSCHESTRTEDALNRLRLGMYAMMREGSAWHDIKATIKSLTETRVDSRRAMLVSDDTHPETLLSTGHLNHVVRRAIEEGLNPIRAIQAVTINTAECFGVAQDLGAIAPGRYADILFLKDLARVAIDKVMVDGRVVAAGGRLLVDLPAVAYPDRVRHSVHLKEPLTPWHFRINAPAGKSRVQVRVMEIIEANVNTRHLTVTVPVVDGQVTAGVEADLAKVAVVERHGGNGSIGLGFVRGFGFKAGAVASTVAHDSHNLLIVGMNDADMALAGNTLAGCGGGMVAVRDGQVLALLPLPIAGLMSDRPVEEVAARLAAVHRAWQELGCRLVSPFMTMALLSLPVLPELRLTNRGLVDTLQFKMVDLITG.

The protein belongs to the metallo-dependent hydrolases superfamily. Adenine deaminase family. Mn(2+) serves as cofactor.

It carries out the reaction adenine + H2O + H(+) = hypoxanthine + NH4(+). In Moorella thermoacetica (strain ATCC 39073 / JCM 9320), this protein is Adenine deaminase.